The primary structure comprises 252 residues: Phosphoglycolate phosphatase (252 aa).

Residue D13 is the Nucleophile of the active site. Residues D13, D15, and D192 each contribute to the Mg(2+) site.

Belongs to the HAD-like hydrolase superfamily. CbbY/CbbZ/Gph/YieH family. Monomer. Mg(2+) serves as cofactor. Requires chloride as cofactor.

The enzyme catalyses 2-phosphoglycolate + H2O = glycolate + phosphate. Its pathway is organic acid metabolism; glycolate biosynthesis; glycolate from 2-phosphoglycolate: step 1/1. Specifically catalyzes the dephosphorylation of 2-phosphoglycolate. Is involved in the dissimilation of the intracellular 2-phosphoglycolate formed during the DNA repair of 3'-phosphoglycolate ends, a major class of DNA lesions induced by oxidative stress. The chain is Phosphoglycolate phosphatase from Shigella sonnei (strain Ss046).